Consider the following 127-residue polypeptide: uncharacterized protein (127 aa).

This is an uncharacterized protein from Thermoproteus tenax (TTV1).